Here is a 285-residue protein sequence, read N- to C-terminus: Energy-coupling factor transporter ATP-binding protein EcfA2 (285 aa).

The region spanning 6-242 (LKVEELNYNY…KEVIRKVNLR (237 aa)) is the ABC transporter domain. An ATP-binding site is contributed by 39-46 (GGNGVGKS).

This sequence belongs to the ABC transporter superfamily. Energy-coupling factor EcfA family. Forms a stable energy-coupling factor (ECF) transporter complex composed of 2 membrane-embedded substrate-binding proteins (S component), 2 ATP-binding proteins (A component) and 2 transmembrane proteins (T component).

The protein resides in the cell membrane. Its function is as follows. ATP-binding (A) component of a common energy-coupling factor (ECF) ABC-transporter complex. Unlike classic ABC transporters this ECF transporter provides the energy necessary to transport a number of different substrates. This chain is Energy-coupling factor transporter ATP-binding protein EcfA2, found in Clostridium perfringens (strain SM101 / Type A).